The sequence spans 374 residues: uncharacterized protein (374 aa).

Positions 1–26 (MNNLIKAYAAGVMSAAFLFGSEGRVR) are cleaved as a signal peptide.

This is an uncharacterized protein from Treponema pallidum (strain Nichols).